A 1165-amino-acid chain; its full sequence is Sperm-associated antigen 5 (1165 aa).

A disordered region spans residues 1 to 23 (MWRVKTLNLGLSPSPQKGKPAMS). Phosphoserine occurs at positions 12, 14, 66, 161, 321, 333, and 342. Residues 431–457 (TVPHREARDSSTQTDSSPCGVTKTPKH) are disordered. Residues 440 to 449 (SSTQTDSSPC) show a composition bias toward polar residues. The segment at 453–821 (KTPKHLQDSK…LRDTVDSLRA (369 aa)) is interaction with KNSTRN. Positions 509–856 (RSKTLVSSCS…LLAEQLQSLT (348 aa)) form a coiled coil. The segment at 875 to 907 (PSTGSAPAQEHPLSNDSSISEQTPTAAVDEVPE) is disordered. Polar residues predominate over residues 876–897 (STGSAPAQEHPLSNDSSISEQT). Residues 937–1146 (DLEKSLAEMS…IQHVYETLLS (210 aa)) adopt a coiled-coil conformation. Serine 946 carries the phosphoserine; by GSK3-beta modification.

As to quaternary structure, homodimer, with a globular head domain and a long stalk. Homooligomer; the globular head domains associate, resulting in aster-like structures. Binds to microtubules in the mitotic spindle. Interacts with DCLRE1B/Apollo. Part of an astrin (SPAG5)-kinastrin (SKAP) complex containing KNSTRN, SPAG5, PLK1, DYNLL1 and SGO2A. Interacts with KNSTRN. Interacts with RPTOR; this interaction competes with RPTOR binding to MTOR, resulting in decreased mTORC1 formation. Interacts with G3BP1. The complex formed with G3BP1 and RPTOR is increased by oxidative stress. Interacts with OSBPL8, PCM1 and CDK5RAP2. Interacts (via C-terminus) with NUMA1 (via C-terminus); this interaction promotes the recruitment of SPAG5 to the microtubules at spindle poles in a dynein-dynactin-dependent manner. Interacts with DYNLL1. Phosphorylated by AURKA. As to expression, detected in testis, but not in the other tissues tested.

It is found in the cytoplasm. The protein localises to the cytoskeleton. The protein resides in the spindle. Its subcellular location is the spindle pole. It localises to the chromosome. It is found in the centromere. The protein localises to the kinetochore. The protein resides in the midbody. Its subcellular location is the microtubule organizing center. It localises to the centrosome. It is found in the centriolar satellite. Essential component of the mitotic spindle required for normal chromosome segregation and progression into anaphase. Required for chromosome alignment, normal timing of sister chromatid segregation, and maintenance of spindle pole architecture. In complex with SKAP, promotes stable microtubule-kinetochore attachments. May contribute to the regulation of separase activity. May regulate AURKA localization to mitotic spindle, but not to centrosomes and CCNB1 localization to both mitotic spindle and centrosomes. Involved in centriole duplication. Required for CDK5RAP22, CEP152, WDR62 and CEP63 centrosomal localization and promotes the centrosomal localization of CDK2. In non-mitotic cells, upon stress induction, inhibits mammalian target of rapamycin complex 1 (mTORC1) association and recruits the mTORC1 component RPTOR to stress granules (SGs), thereby preventing mTORC1 hyperactivation-induced apoptosis. May enhance GSK3B-mediated phosphorylation of other substrates, such as MAPT/TAU. This Mus musculus (Mouse) protein is Sperm-associated antigen 5 (Spag5).